We begin with the raw amino-acid sequence, 385 residues long: 28S rRNA (uridine-N(3))-methyltransferase (385 aa).

Disordered stretches follow at residues 1–35 (MAER…KKKW) and 47–72 (QRAQ…NQGR). Basic and acidic residues-rich tracts occupy residues 15 to 35 (HGQR…KKKW) and 47 to 58 (QRAQEEEAKRQE). R293, G313, N342, and T343 together coordinate S-adenosyl-L-methionine.

This sequence belongs to the class IV-like SAM-binding methyltransferase superfamily. Interacts with INCA1.

The protein localises to the cytoplasm. It localises to the cytoskeleton. The protein resides in the spindle. It is found in the chromosome. Its subcellular location is the centromere. The protein localises to the kinetochore. It localises to the microtubule organizing center. The protein resides in the centrosome. The enzyme catalyses uridine in 28S rRNA + S-adenosyl-L-methionine = N(3)-methyluridine in 28S rRNA + S-adenosyl-L-homocysteine + H(+). Its function is as follows. S-adenosyl-L-methionine-dependent methyltransferase that specifically methylates the N3 position of a uridine in 28S rRNA. Required for association of the centrosomes with the poles of the bipolar mitotic spindle during metaphase. Also involved in chromosome alignment. May promote centrosome maturation probably by recruiting A-kinase anchor protein AKAP9 to centrosomes in early mitosis. Binds specifically to miRNA MIR145 hairpin, regulates MIR145 expression at a postranscriptional level. This is 28S rRNA (uridine-N(3))-methyltransferase from Mus musculus (Mouse).